We begin with the raw amino-acid sequence, 404 residues long: XK-related protein 8 (404 aa).

8 consecutive transmembrane segments (helical) span residues 14–34 (FVFS…DVWV), 44–64 (FFWF…VQMF), 167–187 (AVQF…VVDY), 206–226 (SLIY…ALAL), 227–247 (FASV…LVFV), 263–283 (GEWL…FNVA), 292–312 (AIYH…WWCC), and 319–339 (EPYA…GLLF).

The protein belongs to the XK family.

The protein resides in the cell membrane. It catalyses the reaction a 1,2-diacyl-sn-glycero-3-phospho-L-serine(in) = a 1,2-diacyl-sn-glycero-3-phospho-L-serine(out). Phospholipid scramblase that promotes phosphatidylserine exposure on apoptotic cell surface, possibly by mediating phospholipid scrambling. Phosphatidylserine is a specific marker only present at the surface of apoptotic cells and acts as a specific signal for engulfment. In Tetraodon nigroviridis (Spotted green pufferfish), this protein is XK-related protein 8.